The chain runs to 450 residues: Putative receptor-like protein kinase At1g72540 (450 aa).

Thr-73 is subject to Phosphothreonine. The region spanning 84–365 (FSKYNFLGEG…TVVKTLEPIL (282 aa)) is the Protein kinase domain. Residues 90 to 98 (LGEGGFGEV) and Lys-119 each bind ATP. Position 164 is a phosphotyrosine (Tyr-164). Catalysis depends on Asp-214, which acts as the Proton acceptor. Ser-218 bears the Phosphoserine mark. The residue at position 254 (Thr-254) is a Phosphothreonine. Tyr-262 carries the phosphotyrosine modification.

It belongs to the protein kinase superfamily. Ser/Thr protein kinase family.

It carries out the reaction L-seryl-[protein] + ATP = O-phospho-L-seryl-[protein] + ADP + H(+). The catalysed reaction is L-threonyl-[protein] + ATP = O-phospho-L-threonyl-[protein] + ADP + H(+). This chain is Putative receptor-like protein kinase At1g72540, found in Arabidopsis thaliana (Mouse-ear cress).